A 454-amino-acid polypeptide reads, in one-letter code: Oxygen-dependent coproporphyrinogen-III oxidase, mitochondrial (454 aa).

The transit peptide at 1–110 (MALQLGRLSS…MLPKTSGTRA (110 aa)) directs the protein to the mitochondrion. The interval 43–70 (AAGRVCRPPGPAGTEQSRGLGHGSTSRG) is disordered. At Ser112 the chain carries Phosphoserine. An important for dimerization region spans residues 193-202 (VLQDGCVFEK). Ser244 is a binding site for coproporphyrinogen III. His258 acts as the Proton donor in catalysis. Position 260–262 (260–262 (NYR)) interacts with coproporphyrinogen III. Residues 392–428 (YVEFNLLYDRGTKFGLFTPGSRIESILMSLPLTARWE) form an important for dimerization region. Lys404 is subject to N6-acetyllysine; alternate. The residue at position 404 (Lys404) is an N6-succinyllysine; alternate. Residue 411-413 (GSR) coordinates coproporphyrinogen III.

It belongs to the aerobic coproporphyrinogen-III oxidase family. Homodimer.

The protein resides in the mitochondrion intermembrane space. The catalysed reaction is coproporphyrinogen III + O2 + 2 H(+) = protoporphyrinogen IX + 2 CO2 + 2 H2O. It functions in the pathway porphyrin-containing compound metabolism; protoporphyrin-IX biosynthesis; protoporphyrinogen-IX from coproporphyrinogen-III (O2 route): step 1/1. Catalyzes the aerobic oxidative decarboxylation of propionate groups of rings A and B of coproporphyrinogen-III to yield the vinyl groups in protoporphyrinogen-IX and participates to the sixth step in the heme biosynthetic pathway. The sequence is that of Oxygen-dependent coproporphyrinogen-III oxidase, mitochondrial from Homo sapiens (Human).